The sequence spans 205 residues: Proteasome subunit beta type-3 (205 aa).

This sequence belongs to the peptidase T1B family. In terms of assembly, the 26S proteasome consists of a 20S proteasome core and two 19S regulatory subunits. The 20S proteasome core is composed of 28 subunits that are arranged in four stacked rings, resulting in a barrel-shaped structure. The two end rings are each formed by seven alpha subunits, and the two central rings are each formed by seven beta subunits. The catalytic chamber with the active sites is on the inside of the barrel.

The protein resides in the cytoplasm. It is found in the nucleus. Its function is as follows. Non-catalytic component of the proteasome, a multicatalytic proteinase complex which is characterized by its ability to cleave peptides with Arg, Phe, Tyr, Leu, and Glu adjacent to the leaving group at neutral or slightly basic pH. The proteasome has an ATP-dependent proteolytic activity. This Oncorhynchus mykiss (Rainbow trout) protein is Proteasome subunit beta type-3 (psmb3).